The chain runs to 501 residues: Ribose import ATP-binding protein RbsA (501 aa).

2 consecutive ABC transporter domains span residues 5-241 and 252-495; these read LQLQ…VGRK and APGE…VGKQ. 37-44 is an ATP binding site; the sequence is GENGAGKS.

This sequence belongs to the ABC transporter superfamily. Ribose importer (TC 3.A.1.2.1) family. As to quaternary structure, the complex is composed of an ATP-binding protein (RbsA), two transmembrane proteins (RbsC) and a solute-binding protein (RbsB).

It localises to the cell inner membrane. It catalyses the reaction D-ribose(out) + ATP + H2O = D-ribose(in) + ADP + phosphate + H(+). In terms of biological role, part of the ABC transporter complex RbsABC involved in ribose import. Responsible for energy coupling to the transport system. This is Ribose import ATP-binding protein RbsA from Pectobacterium atrosepticum (strain SCRI 1043 / ATCC BAA-672) (Erwinia carotovora subsp. atroseptica).